Consider the following 31-residue polypeptide: Cytochrome b6-f complex subunit 6 (31 aa).

The chain crosses the membrane as a helical span at residues 5 to 25 (ISYLGILVGALLFVTITFLTL).

This sequence belongs to the PetL family. In terms of assembly, the 4 large subunits of the cytochrome b6-f complex are cytochrome b6, subunit IV (17 kDa polypeptide, PetD), cytochrome f and the Rieske protein, while the 4 small subunits are PetG, PetL, PetM and PetN. The complex functions as a dimer.

It localises to the plastid. The protein localises to the chloroplast thylakoid membrane. Functionally, component of the cytochrome b6-f complex, which mediates electron transfer between photosystem II (PSII) and photosystem I (PSI), cyclic electron flow around PSI, and state transitions. PetL is important for photoautotrophic growth as well as for electron transfer efficiency and stability of the cytochrome b6-f complex. The chain is Cytochrome b6-f complex subunit 6 from Chlorokybus atmophyticus (Soil alga).